The chain runs to 552 residues: Putative acetolactate synthase large subunit IlvB2 (552 aa).

E48 contacts thiamine diphosphate. Residues 262-285 and 309-328 each bind FAD; these read FGDG…VGVS and DPDP…ITTS. A thiamine pyrophosphate binding region spans residues 394-474; sequence TCISWTFRGI…VTWAVLNDGQ (81 aa). Mg(2+) is bound at residue D445.

This sequence belongs to the TPP enzyme family. As to quaternary structure, heterodimer of large catalytic subunit and small regulatory subunit. The cofactor is Mg(2+). It depends on thiamine diphosphate as a cofactor.

It catalyses the reaction 2 pyruvate + H(+) = (2S)-2-acetolactate + CO2. The protein operates within amino-acid biosynthesis; L-isoleucine biosynthesis; L-isoleucine from 2-oxobutanoate: step 1/4. It participates in amino-acid biosynthesis; L-valine biosynthesis; L-valine from pyruvate: step 1/4. In terms of biological role, catalyzes the conversion of 2 pyruvate molecules into acetolactate in the first common step of the biosynthetic pathway of the branched-amino acids such as leucine, isoleucine, and valine. The protein is Putative acetolactate synthase large subunit IlvB2 (ilvB2) of Mycobacterium tuberculosis (strain ATCC 25618 / H37Rv).